The chain runs to 609 residues: Glutamine--fructose-6-phosphate aminotransferase [isomerizing] (609 aa).

Catalysis depends on Cys2, which acts as the Nucleophile; for GATase activity. One can recognise a Glutamine amidotransferase type-2 domain in the interval 2–218; it reads CGIVGAIAQR…EGDIAEITRR (217 aa). 2 consecutive SIS domains span residues 286-426 and 458-599; these read ADEL…LKGL and LAED…VDQP. The For Fru-6P isomerization activity role is filled by Lys604.

As to quaternary structure, homodimer.

It is found in the cytoplasm. The catalysed reaction is D-fructose 6-phosphate + L-glutamine = D-glucosamine 6-phosphate + L-glutamate. In terms of biological role, catalyzes the first step in hexosamine metabolism, converting fructose-6P into glucosamine-6P using glutamine as a nitrogen source. The polypeptide is Glutamine--fructose-6-phosphate aminotransferase [isomerizing] (Salmonella typhimurium (strain LT2 / SGSC1412 / ATCC 700720)).